Here is a 491-residue protein sequence, read N- to C-terminus: Probable cytosol aminopeptidase (491 aa).

Mn(2+) contacts are provided by K264 and D269. The active site involves K276. Residues D287, D346, and E348 each coordinate Mn(2+). R350 is a catalytic residue.

Belongs to the peptidase M17 family. Requires Mn(2+) as cofactor.

It is found in the cytoplasm. The catalysed reaction is Release of an N-terminal amino acid, Xaa-|-Yaa-, in which Xaa is preferably Leu, but may be other amino acids including Pro although not Arg or Lys, and Yaa may be Pro. Amino acid amides and methyl esters are also readily hydrolyzed, but rates on arylamides are exceedingly low.. It carries out the reaction Release of an N-terminal amino acid, preferentially leucine, but not glutamic or aspartic acids.. In terms of biological role, presumably involved in the processing and regular turnover of intracellular proteins. Catalyzes the removal of unsubstituted N-terminal amino acids from various peptides. The protein is Probable cytosol aminopeptidase of Xylella fastidiosa (strain M12).